The primary structure comprises 313 residues: tRNA dimethylallyltransferase (313 aa).

11 to 18 is a binding site for ATP; it reads GPTACGKT. Substrate is bound at residue 13-18; that stretch reads TACGKT. Interaction with substrate tRNA stretches follow at residues 36–39, 160–164, and 243–248; these read DSAL, QRIGR, and RCVGYR.

The protein belongs to the IPP transferase family. In terms of assembly, monomer. Mg(2+) serves as cofactor.

It catalyses the reaction adenosine(37) in tRNA + dimethylallyl diphosphate = N(6)-dimethylallyladenosine(37) in tRNA + diphosphate. Functionally, catalyzes the transfer of a dimethylallyl group onto the adenine at position 37 in tRNAs that read codons beginning with uridine, leading to the formation of N6-(dimethylallyl)adenosine (i(6)A). The polypeptide is tRNA dimethylallyltransferase (Neisseria gonorrhoeae (strain NCCP11945)).